Reading from the N-terminus, the 311-residue chain is Pyrimidine-specific ribonucleoside hydrolase RihA (311 aa).

Residue His240 is part of the active site.

This sequence belongs to the IUNH family. RihA subfamily.

Functionally, hydrolyzes cytidine or uridine to ribose and cytosine or uracil, respectively. The chain is Pyrimidine-specific ribonucleoside hydrolase RihA from Shigella flexneri serotype 5b (strain 8401).